We begin with the raw amino-acid sequence, 294 residues long: Bidirectional sugar transporter SWEET13 (294 aa).

Residues 1 to 7 lie on the Extracellular side of the membrane; that stretch reads MALTNNL. A helical membrane pass occupies residues 8 to 28; the sequence is WAFVFGILGNIISFVVFLAPV. The region spanning 10-97 is the MtN3/slv 1 domain; that stretch reads FVFGILGNII…VLFVSYANKK (88 aa). Residues 29–42 lie on the Cytoplasmic side of the membrane; that stretch reads PTFVRICKKKSTEG. The helical transmembrane segment at 43–63 threads the bilayer; it reads FQSLPYVSALFSAMLWIYYAM. The Extracellular portion of the chain corresponds to 64-69; sequence QKDGTA. A helical transmembrane segment spans residues 70–90; that stretch reads FLLITINAFGCVIETIYIVLF. The Cytoplasmic segment spans residues 91–104; it reads VSYANKKTRISTLK. Residues 105–125 form a helical membrane-spanning segment; it reads VLGLLNFLGFAAIVLVCELLT. Topologically, residues 126–132 are extracellular; sequence KGSTREK. Residues 133 to 153 form a helical membrane-spanning segment; it reads VLGGICVGFSVSVFAAPLSIM. The MtN3/slv 2 domain maps to 133 to 216; that stretch reads VLGGICVGFS…MILYIIFKYY (84 aa). At 154 to 166 the chain is on the cytoplasmic side; that stretch reads RVVVRTRSVEFMP. Residues 167 to 187 form a helical membrane-spanning segment; it reads FSLSLFLTISAVTWLFYGLAI. The Extracellular portion of the chain corresponds to 188 to 192; the sequence is KDFYV. Residues 193-213 form a helical membrane-spanning segment; that stretch reads ALPNVLGAFLGAVQMILYIIF. The Cytoplasmic segment spans residues 214-294; sequence KYYKTPVAQK…NKDVQKQSQV (81 aa). The tract at residues 273 to 294 is disordered; it reads KSQNMTDPKDQINKDVQKQSQV. The span at 279 to 294 shows a compositional bias: basic and acidic residues; the sequence is DPKDQINKDVQKQSQV.

It belongs to the SWEET sugar transporter family. As to quaternary structure, forms heterooligomers with SWEET1, SWEET3, SWEET6, SWEET7, SWEET8, SWEET9, SWEET11 and SWEET17. Expressed at low levels in leaves.

The protein localises to the cell membrane. Its function is as follows. Mediates both low-affinity uptake and efflux of sugar across the plasma membrane. Involved in nurturing the male gametophyte. The polypeptide is Bidirectional sugar transporter SWEET13 (Arabidopsis thaliana (Mouse-ear cress)).